A 466-amino-acid polypeptide reads, in one-letter code: Uronate isomerase (466 aa).

It belongs to the metallo-dependent hydrolases superfamily. Uronate isomerase family.

It catalyses the reaction D-glucuronate = D-fructuronate. It carries out the reaction aldehydo-D-galacturonate = keto-D-tagaturonate. It participates in carbohydrate metabolism; pentose and glucuronate interconversion. This chain is Uronate isomerase, found in Streptococcus pneumoniae (strain 70585).